The following is a 393-amino-acid chain: tRNA (guanine-N(7)-)-methyltransferase (393 aa).

3 residues coordinate S-adenosyl-L-methionine: glutamate 124, glutamate 149, and aspartate 176. Position 232 (aspartate 232) interacts with substrate.

Belongs to the class I-like SAM-binding methyltransferase superfamily. TrmB family.

It catalyses the reaction guanosine(46) in tRNA + S-adenosyl-L-methionine = N(7)-methylguanosine(46) in tRNA + S-adenosyl-L-homocysteine. Its pathway is tRNA modification; N(7)-methylguanine-tRNA biosynthesis. Catalyzes the formation of N(7)-methylguanine at position 46 (m7G46) in tRNA. This is tRNA (guanine-N(7)-)-methyltransferase from Helicobacter pylori (strain ATCC 700392 / 26695) (Campylobacter pylori).